We begin with the raw amino-acid sequence, 275 residues long: Voltage-dependent calcium channel gamma-7 subunit (275 aa).

The next 4 membrane-spanning stretches (helical) occupy residues 8–28 (ALTL…GIAV), 103–123 (FPMV…IGHI), 129–149 (ILAF…VVGL), and 179–199 (FAFA…SVYL). Phosphoserine occurs at positions 222, 225, and 273.

Belongs to the PMP-22/EMP/MP20 family. CACNG subfamily. In terms of assembly, interacts with CACNA1C. Identified in a complex with the L-type calcium channel subunits CACNA1C, CACNA2D1 and either CACNB1 or CACNB2. Acts as an auxiliary subunit for AMPA-selective glutamate receptors (AMPARs), such as GRIA1 and GRIA2. Detected in heart left ventricle. Widely expressed.

The protein localises to the cell membrane. Regulates the activity of L-type calcium channels that contain CACNA1C as pore-forming subunit. Regulates the trafficking and gating properties of AMPA-selective glutamate receptors (AMPARs). Promotes their targeting to the cell membrane and synapses and modulates their gating properties by slowing their rates of activation, deactivation and desensitization and by mediating their resensitization. Displays subunit-specific AMPA receptor regulation. Shows specificity only for GRIA1 and GRIA2. The chain is Voltage-dependent calcium channel gamma-7 subunit (CACNG7) from Homo sapiens (Human).